The following is a 55-amino-acid chain: ATP synthase protein 8 (55 aa).

A helical transmembrane segment spans residues 7–24 (NPWFFIMIISWLTYSMII). Positions 34–55 (TNPPARKEPTTNTTTPWNWPWT) are disordered. Residues 43 to 55 (TTNTTTPWNWPWT) show a composition bias toward low complexity.

This sequence belongs to the ATPase protein 8 family. In terms of assembly, F-type ATPases have 2 components, CF(1) - the catalytic core - and CF(0) - the membrane proton channel.

The protein localises to the mitochondrion membrane. Mitochondrial membrane ATP synthase (F(1)F(0) ATP synthase or Complex V) produces ATP from ADP in the presence of a proton gradient across the membrane which is generated by electron transport complexes of the respiratory chain. F-type ATPases consist of two structural domains, F(1) - containing the extramembraneous catalytic core and F(0) - containing the membrane proton channel, linked together by a central stalk and a peripheral stalk. During catalysis, ATP synthesis in the catalytic domain of F(1) is coupled via a rotary mechanism of the central stalk subunits to proton translocation. Part of the complex F(0) domain. Minor subunit located with subunit a in the membrane. This is ATP synthase protein 8 (MT-ATP8) from Vireo altiloquus (Black-whiskered vireo).